The primary structure comprises 369 residues: Cobalt-precorrin-5B C(1)-methyltransferase (369 aa).

The protein belongs to the CbiD family.

The catalysed reaction is Co-precorrin-5B + S-adenosyl-L-methionine = Co-precorrin-6A + S-adenosyl-L-homocysteine. It participates in cofactor biosynthesis; adenosylcobalamin biosynthesis; cob(II)yrinate a,c-diamide from sirohydrochlorin (anaerobic route): step 6/10. Its function is as follows. Catalyzes the methylation of C-1 in cobalt-precorrin-5B to form cobalt-precorrin-6A. The sequence is that of Cobalt-precorrin-5B C(1)-methyltransferase from Prosthecochloris aestuarii (strain DSM 271 / SK 413).